The chain runs to 695 residues: GRB2-associated-binding protein 1 (695 aa).

The residue at position 2 (Ser2) is an N-acetylserine. In terms of domain architecture, PH spans 5 to 116 (EVVCSGWLRK…WVRCICDICG (112 aa)). Positions 204–229 (AKPTFSETDCNDNVPSHQTPASSQSK) are disordered. Over residues 206-229 (PTFSETDCNDNVPSHQTPASSQSK) the composition is skewed to polar residues. Phosphoserine occurs at positions 251, 253, 266, and 304. The tract at residues 306 to 387 (SYDIPPTPGN…PAGMTPSRSN (82 aa)) is disordered. Over residues 314–334 (GNTYQIPRTFPESTLGQSSKL) the composition is skewed to polar residues. Thr388 is subject to Phosphothreonine. Residues Ser403 and Ser455 each carry the phosphoserine modification. The tract at residues 453 to 659 (PNSPPRQHSG…GSSMADERVD (207 aa)) is disordered. Composition is skewed to polar residues over residues 457 to 466 (PRQHSGSFTE) and 605 to 617 (FASNSLDGGSSPM). The residue at position 628 (Tyr628) is a Phosphotyrosine. Thr639 is subject to Phosphothreonine. Phosphoserine is present on Ser652. Tyr660 bears the Phosphotyrosine mark. The segment at 671–695 (LKSTREAWTDGRQSTESETPTKNVK) is disordered. The segment covering 673-685 (STREAWTDGRQST) has biased composition (basic and acidic residues). The residue at position 684 (Ser684) is a Phosphoserine. The span at 686 to 695 (ESETPTKNVK) shows a compositional bias: polar residues.

Belongs to the GAB family. As to quaternary structure, identified in a complex containing FRS2, GRB2, GAB1, PIK3R1 and SOS1. Forms a tripartite complex containing GAB1, METTL13 and SPRY2. Within the complex interacts with METTL13. Interacts with GRB2 and with other SH2-containing proteins. Interacts with phosphorylated LAT2. Interacts with PTPRJ. Interacts (phosphorylated) with PTPN11. Interacts with HCK. In terms of processing, phosphorylated on tyrosine residue(s) by the epidermal growth factor receptor (EGFR) and the insulin receptor (INSR). Tyrosine phosphorylation of GAB1 mediates interaction with several proteins that contain SH2 domains. Phosphorylated on tyrosine residues by HCK upon IL6 signaling. Phosphorylated in response to FGFR1 activation. Expressed in the inner ear (at protein level). Expression is detected in the cochlear duct, spiral limbus region, efferent and afferent nerves, and in spiral ganglion neurons (at protein level).

In terms of biological role, adapter protein that plays a role in intracellular signaling cascades triggered by activated receptor-type kinases. Plays a role in FGFR1 signaling. Probably involved in signaling by the epidermal growth factor receptor (EGFR) and the insulin receptor (INSR). Involved in the MET/HGF-signaling pathway. This Mus musculus (Mouse) protein is GRB2-associated-binding protein 1 (Gab1).